Consider the following 195-residue polypeptide: Imidazoleglycerol-phosphate dehydratase (195 aa).

The protein belongs to the imidazoleglycerol-phosphate dehydratase family.

It is found in the cytoplasm. It carries out the reaction D-erythro-1-(imidazol-4-yl)glycerol 3-phosphate = 3-(imidazol-4-yl)-2-oxopropyl phosphate + H2O. Its pathway is amino-acid biosynthesis; L-histidine biosynthesis; L-histidine from 5-phospho-alpha-D-ribose 1-diphosphate: step 6/9. This chain is Imidazoleglycerol-phosphate dehydratase, found in Burkholderia ambifaria (strain MC40-6).